Consider the following 476-residue polypeptide: Proline dehydrogenase 2, mitochondrial (476 aa).

Residues 1 to 29 (MANRFLRPNLIHRFSTVSPVGPPTTIIPE) constitute a mitochondrion transit peptide.

The protein belongs to the proline oxidase family. FAD is required as a cofactor. In terms of tissue distribution, expressed in the vascular tissue and in the abscission zone of petals, sepals, stamina, pistils and siliques. Not detected in petioles.

The protein resides in the mitochondrion. The enzyme catalyses L-proline + a quinone = (S)-1-pyrroline-5-carboxylate + a quinol + H(+). It participates in amino-acid degradation; L-proline degradation into L-glutamate; L-glutamate from L-proline: step 1/2. In terms of biological role, converts proline to delta-1-pyrroline-5-carboxylate. The sequence is that of Proline dehydrogenase 2, mitochondrial (POX2) from Arabidopsis thaliana (Mouse-ear cress).